A 331-amino-acid polypeptide reads, in one-letter code: Pantothenate kinase (331 aa).

Position 109–116 (109–116 (GSVAVGKS)) interacts with ATP.

Belongs to the prokaryotic pantothenate kinase family.

The protein resides in the cytoplasm. The enzyme catalyses (R)-pantothenate + ATP = (R)-4'-phosphopantothenate + ADP + H(+). It participates in cofactor biosynthesis; coenzyme A biosynthesis; CoA from (R)-pantothenate: step 1/5. The protein is Pantothenate kinase of Rhizobium etli (strain CIAT 652).